A 115-amino-acid polypeptide reads, in one-letter code: METTAVLRGVRLSEQKGRLVADQIRGLPVERALNLLAFSPKKAAVIIRKLLESAIANAEHNEGADIDELKVSRIYVDRGPSLMRTSARAKGRGNRIVKPTCHILLTVGDKASNKK.

Belongs to the universal ribosomal protein uL22 family. In terms of assembly, part of the 50S ribosomal subunit.

Functionally, this protein binds specifically to 23S rRNA; its binding is stimulated by other ribosomal proteins, e.g. L4, L17, and L20. It is important during the early stages of 50S assembly. It makes multiple contacts with different domains of the 23S rRNA in the assembled 50S subunit and ribosome. Its function is as follows. The globular domain of the protein is located near the polypeptide exit tunnel on the outside of the subunit, while an extended beta-hairpin is found that lines the wall of the exit tunnel in the center of the 70S ribosome. The protein is Large ribosomal subunit protein uL22 of Nitrosospira multiformis (strain ATCC 25196 / NCIMB 11849 / C 71).